The primary structure comprises 233 residues: Probable F-box protein At3g56670 (233 aa).

The 48-residue stretch at 22-69 folds into the F-box domain; that stretch reads HGGVIDIPLNTDSGVTKNTPGEIALLRFKSVSKLWSSIISSRRDFIES.

The sequence is that of Probable F-box protein At3g56670 from Arabidopsis thaliana (Mouse-ear cress).